Consider the following 101-residue polypeptide: Large ribosomal subunit protein bL25 (101 aa).

This sequence belongs to the bacterial ribosomal protein bL25 family. As to quaternary structure, part of the 50S ribosomal subunit; part of the 5S rRNA/L5/L18/L25 subcomplex. Contacts the 5S rRNA. Binds to the 5S rRNA independently of L5 and L18.

Its function is as follows. This is one of the proteins that binds to the 5S RNA in the ribosome where it forms part of the central protuberance. This is Large ribosomal subunit protein bL25 from Thermosynechococcus vestitus (strain NIES-2133 / IAM M-273 / BP-1).